The sequence spans 217 residues: MINRAQLLDTLASQAPRDFEAQALGLVPIVVETSGRGERSYDIYSRLLKERIVFMVGEVNDQTANLVVAQLLFLESENPDKDISLYINSPGGSVSAGMAIYDTMQFVKPDVSTLCMGLAASMGAFLLASGAKGKRYALPNARVMIHQPLGGARGQASDIEIQAREILYLRDRLNHLLAHHTGQDVERIARDTDRDNFMSSEDAKAYGLIDHVSTKRP.

The Nucleophile role is filled by S121. H146 is an active-site residue.

The protein belongs to the peptidase S14 family. As to quaternary structure, fourteen ClpP subunits assemble into 2 heptameric rings which stack back to back to give a disk-like structure with a central cavity, resembling the structure of eukaryotic proteasomes.

The protein localises to the cytoplasm. The catalysed reaction is Hydrolysis of proteins to small peptides in the presence of ATP and magnesium. alpha-casein is the usual test substrate. In the absence of ATP, only oligopeptides shorter than five residues are hydrolyzed (such as succinyl-Leu-Tyr-|-NHMec, and Leu-Tyr-Leu-|-Tyr-Trp, in which cleavage of the -Tyr-|-Leu- and -Tyr-|-Trp bonds also occurs).. In terms of biological role, cleaves peptides in various proteins in a process that requires ATP hydrolysis. Has a chymotrypsin-like activity. Plays a major role in the degradation of misfolded proteins. This is ATP-dependent Clp protease proteolytic subunit from Burkholderia mallei (strain NCTC 10247).